The sequence spans 210 residues: Orotate phosphoribosyltransferase (210 aa).

5-phospho-alpha-D-ribose 1-diphosphate is bound by residues Arg94, Lys98, His100, and 120–128 (EDLISTGGS). Ser124 is a binding site for orotate.

It belongs to the purine/pyrimidine phosphoribosyltransferase family. PyrE subfamily. In terms of assembly, homodimer. Mg(2+) serves as cofactor.

It catalyses the reaction orotidine 5'-phosphate + diphosphate = orotate + 5-phospho-alpha-D-ribose 1-diphosphate. The protein operates within pyrimidine metabolism; UMP biosynthesis via de novo pathway; UMP from orotate: step 1/2. Its function is as follows. Catalyzes the transfer of a ribosyl phosphate group from 5-phosphoribose 1-diphosphate to orotate, leading to the formation of orotidine monophosphate (OMP). In Bacillus anthracis (strain A0248), this protein is Orotate phosphoribosyltransferase.